The primary structure comprises 96 residues: Neutrophil defensin 8 (96 aa).

A signal peptide spans 1–19 (MRTLVILAAILLVALQAQA). Residues 20-66 (EPLQARTDEATAAQEQIPTDNPEVVVSLAWDESLAPKDSVPGLRKNM) constitute a propeptide that is removed on maturation. Intrachain disulfides connect C68-C96, C70-C85, and C75-C95.

The protein belongs to the alpha-defensin family.

It is found in the secreted. Its function is as follows. Probable antibiotic and antifungal activity. The polypeptide is Neutrophil defensin 8 (Macaca mulatta (Rhesus macaque)).